Reading from the N-terminus, the 106-residue chain is Small ribosomal subunit protein uS10 (106 aa).

Belongs to the universal ribosomal protein uS10 family. Part of the 30S ribosomal subunit.

In terms of biological role, involved in the binding of tRNA to the ribosomes. The polypeptide is Small ribosomal subunit protein uS10 (Synechococcus sp. (strain RCC307)).